The sequence spans 157 residues: Urease accessory protein UreE (157 aa).

This sequence belongs to the UreE family.

The protein localises to the cytoplasm. Involved in urease metallocenter assembly. Binds nickel. Probably functions as a nickel donor during metallocenter assembly. The polypeptide is Urease accessory protein UreE (Paenarthrobacter aurescens (strain TC1)).